Consider the following 154-residue polypeptide: Protein X (154 aa).

Residues 68-117 (PCALRFTSARCMETTVNAPRNLPKVLHKRTLGLSTMSTTGIETYFKDCVF) are mitochondrial targeting sequence.

This sequence belongs to the orthohepadnavirus protein X family. In terms of assembly, may form homodimer. May interact with host CEBPA, CFLAR, CREB1, DDB1, E4F1, HBXIP, HSPD1/HSP60, NFKBIA, POLR2E and SMAD4. Interacts with host SMC5-SMC6 complex and induces its degradation. Interacts with host TRPC4AP; leading to prevent ubiquitination of TRPC4AP. Interacts with host PLSCR1; this interaction promotes ubiquitination and degradation of HBx and impairs HBx-mediated cell proliferation. A fraction may be phosphorylated in insect cells and HepG2 cells, a human hepatoblastoma cell line. Phosphorylated in vitro by host protein kinase C or mitogen-activated protein kinase. N-acetylated in insect cells.

The protein resides in the host cytoplasm. The protein localises to the host nucleus. Its subcellular location is the host mitochondrion. In terms of biological role, multifunctional protein that plays a role in silencing host antiviral defenses and promoting viral transcription. Does not seem to be essential for HBV infection. May be directly involved in development of cirrhosis and liver cancer (hepatocellular carcinoma). Most of cytosolic activities involve modulation of cytosolic calcium. The effect on apoptosis is controversial depending on the cell types in which the studies have been conducted. May induce apoptosis by localizing in mitochondria and causing loss of mitochondrial membrane potential. May also modulate apoptosis by binding host CFLAR, a key regulator of the death-inducing signaling complex (DISC). Promotes viral transcription by using the host E3 ubiquitin ligase DDB1 to target the SMC5-SMC6 complex to proteasomal degradation. This host complex would otherwise bind to viral episomal DNA, and prevents its transcription. Moderately stimulates transcription of many different viral and cellular transcription elements. Promoters and enhancers stimulated by HBx contain DNA binding sites for NF-kappa-B, AP-1, AP-2, c-EBP, ATF/CREB, or the calcium-activated factor NF-AT. In Orangutan hepatitis B virus (isolate Somad) (HBVoru), this protein is Protein X.